A 602-amino-acid polypeptide reads, in one-letter code: Protein nessun dorma (602 aa).

A coiled-coil region spans residues 188 to 208 (AEAKYIQQRLDYLELDLSDAE).

In terms of assembly, interacts (via N-terminus) with both members of the centralspindlin complex, Pav and Tum. As to expression, detected in testis (at protein level). Also expressed in ovary.

It is found in the midbody. Functionally, required during male meiosis for completion of spermatocyte cytokinesis and possibly also required in female germline cells. Also involved in ring canal formation in male and female germline cells. Not essential for cleavage furrow ingression but is required for contractile ring stability and the attachment of the furrowing membrane to the actomyosin ring in late telophase. Displays high binding affinity for beta-galactosides. The chain is Protein nessun dorma from Drosophila melanogaster (Fruit fly).